Consider the following 245-residue polypeptide: tRNA1(Val) (adenine(37)-N6)-methyltransferase (245 aa).

This sequence belongs to the methyltransferase superfamily. tRNA (adenine-N(6)-)-methyltransferase family.

The protein resides in the cytoplasm. It carries out the reaction adenosine(37) in tRNA1(Val) + S-adenosyl-L-methionine = N(6)-methyladenosine(37) in tRNA1(Val) + S-adenosyl-L-homocysteine + H(+). Functionally, specifically methylates the adenine in position 37 of tRNA(1)(Val) (anticodon cmo5UAC). This is tRNA1(Val) (adenine(37)-N6)-methyltransferase from Shigella sonnei (strain Ss046).